Here is a 602-residue protein sequence, read N- to C-terminus: 4-hydroxy-3-methylbut-2-en-1-yl diphosphate synthase (flavodoxin) (602 aa).

[4Fe-4S] cluster is bound by residues Cys508, Cys511, Cys543, and Glu550.

Belongs to the IspG family. Requires [4Fe-4S] cluster as cofactor.

The enzyme catalyses (2E)-4-hydroxy-3-methylbut-2-enyl diphosphate + oxidized [flavodoxin] + H2O + 2 H(+) = 2-C-methyl-D-erythritol 2,4-cyclic diphosphate + reduced [flavodoxin]. The protein operates within isoprenoid biosynthesis; isopentenyl diphosphate biosynthesis via DXP pathway; isopentenyl diphosphate from 1-deoxy-D-xylulose 5-phosphate: step 5/6. Functionally, converts 2C-methyl-D-erythritol 2,4-cyclodiphosphate (ME-2,4cPP) into 1-hydroxy-2-methyl-2-(E)-butenyl 4-diphosphate. This chain is 4-hydroxy-3-methylbut-2-en-1-yl diphosphate synthase (flavodoxin), found in Chlamydia trachomatis serovar L2 (strain ATCC VR-902B / DSM 19102 / 434/Bu).